The primary structure comprises 262 residues: LysM domain-containing protein ARB_03438 (262 aa).

Residues 1–22 (MVSIPLILGAIILLGTRKAATA) form the signal peptide. One can recognise a LysM 1 domain in the interval 31-75 (FAVTAATDDTCQSLGAQWGIGMAQFLKWNPGVNCNALVAGKTYCL). A disordered region spans residues 85–112 (TASLTPSPQVPTTSRATQTMTSKASTGT). The segment covering 86–112 (ASLTPSPQVPTTSRATQTMTSKASTGT) has biased composition (polar residues). The LysM 2 domain occupies 132–179 (FYHPVSPGDTCQSIVDRYKAFTLDQFYTWNPSVGKNCESLWLGYYVCT). A disordered region spans residues 184–240 (GPNSPSQQPPSQQPPSQQSPSQQSPSQQSPSQQPPSQQPPSQQPPSQQSNTSQQTQP). The span at 197–214 (PPSQQSPSQQSPSQQSPS) shows a compositional bias: low complexity. The segment covering 215-226 (QQPPSQQPPSQQ) has biased composition (pro residues). A compositionally biased stretch (low complexity) spans 227–240 (PPSQQSNTSQQTQP). N-linked (GlcNAc...) asparagine glycosylation is present at N233.

It localises to the secreted. Functionally, might have a role in sequestration of chitin oligosaccharides (breakdown products of fungal cell walls that are released during invasion and act as triggers of host immunity) to dampen host defense. The polypeptide is LysM domain-containing protein ARB_03438 (Arthroderma benhamiae (strain ATCC MYA-4681 / CBS 112371) (Trichophyton mentagrophytes)).